The primary structure comprises 502 residues: Probable malate:quinone oxidoreductase (502 aa).

This sequence belongs to the MQO family. It depends on FAD as a cofactor.

The catalysed reaction is (S)-malate + a quinone = a quinol + oxaloacetate. The protein operates within carbohydrate metabolism; tricarboxylic acid cycle; oxaloacetate from (S)-malate (quinone route): step 1/1. The chain is Probable malate:quinone oxidoreductase from Synechococcus sp. (strain CC9605).